The sequence spans 342 residues: uncharacterized protein (342 aa).

This sequence belongs to the proline racemase family.

This is an uncharacterized protein from Brucella canis (strain ATCC 23365 / NCTC 10854 / RM-666).